Reading from the N-terminus, the 398-residue chain is MNIHEYQAKRLLHEYGAPIANGVAVYSIEQAEKWAKKLPGPLYVVKSQIHAGGRGKGKFKELDLDSKGGVRLAKSVEEVVANVKEMLGKTLVTKQTGPEGKQVNRLYIEDGADIERELYLSLLVDRAVGRVAFVVSMEGGMDIETVAEETPEKILTLPVDPVQGVTSADCKRLCDALELHDNARKDGEKLFPILYKAFCEKDMSLLEINPLIVMKDGHLRVLDAKISFDNNALFRHPDILELRDLSEEDPKEIEASKHDLAYVALEGTIGCMVNGAGLAMATMDIIKLYGAEPANFLDVGGGASKEKVTAAFKIITADPNVKGILVNIFGGIMRCDVIAEGVVAAVREVGLKVPLVVRLEGTNIEQGKAIISDSGLNVISASDLDDAAQKIIAAVRGA.

Residues lysine 9–glutamate 254 form the ATP-grasp domain. ATP is bound by residues lysine 46, glycine 53–glycine 55, glutamate 109, alanine 112, and glutamate 117. Mg(2+) is bound by residues asparagine 209 and aspartate 223. Residues asparagine 274 and glycine 331 to methionine 333 each bind substrate.

It belongs to the succinate/malate CoA ligase beta subunit family. Heterotetramer of two alpha and two beta subunits. Requires Mg(2+) as cofactor.

It catalyses the reaction succinate + ATP + CoA = succinyl-CoA + ADP + phosphate. The catalysed reaction is GTP + succinate + CoA = succinyl-CoA + GDP + phosphate. The protein operates within carbohydrate metabolism; tricarboxylic acid cycle; succinate from succinyl-CoA (ligase route): step 1/1. Its function is as follows. Succinyl-CoA synthetase functions in the citric acid cycle (TCA), coupling the hydrolysis of succinyl-CoA to the synthesis of either ATP or GTP and thus represents the only step of substrate-level phosphorylation in the TCA. The beta subunit provides nucleotide specificity of the enzyme and binds the substrate succinate, while the binding sites for coenzyme A and phosphate are found in the alpha subunit. This is Succinate--CoA ligase [ADP-forming] subunit beta from Bartonella quintana (strain Toulouse) (Rochalimaea quintana).